Consider the following 460-residue polypeptide: ERAD-associated E3 ubiquitin-protein ligase HRD1B (460 aa).

Topologically, residues 1–3 (MIQ) are cytoplasmic. Residues 4-24 (LKVYAGLSTLATLVVIYHAFS) form a helical membrane-spanning segment. The Lumenal segment spans residues 25 to 40 (SRGQFYPATVYLSTSK). The chain crosses the membrane as a helical span at residues 41 to 61 (INLVVLLNMGLVLMLSLWNLV). Over 62-98 (KIVFLGSLREAEVERLNEQAWRELMEILFAITIFRQD) the chain is Cytoplasmic. The chain crosses the membrane as a helical span at residues 99 to 119 (FSVGFISLVVTLLLIKGLHWM). The Lumenal segment spans residues 120 to 140 (AQKRVEYIETTPSVTLLSHVR). The chain crosses the membrane as a helical span at residues 141–161 (IVSFMVFLLILDCLLTYSSIQ). Topologically, residues 162-170 (QLIQSRKAS) are cytoplasmic. A helical membrane pass occupies residues 171-191 (MSVFFTFEYMILATTTVSIIV). Over 192 to 225 (KYAFYVTDMLKEGQWEGKPVYTFYLELVRDLLHL) the chain is Lumenal. A helical transmembrane segment spans residues 226 to 246 (SMYLCFFLMIFMNYGLPLHLI). Over 247–460 (RELYETFRNF…TKGKSVADTA (214 aa)) the chain is Cytoplasmic. The RING-type; atypical zinc-finger motif lies at 292 to 330 (CIICREEMTSAKKLVCGHLFHVHCLRSWLERQNTCPTCR). Residues 339–378 (ATSTASGNRGPHQESLQQGTGTSSSDGQGSSVSAAASENM) are disordered. A compositionally biased stretch (low complexity) spans 353–375 (SLQQGTGTSSSDGQGSSVSAAAS).

It belongs to the HRD1 family.

Its subcellular location is the endoplasmic reticulum membrane. It carries out the reaction S-ubiquitinyl-[E2 ubiquitin-conjugating enzyme]-L-cysteine + [acceptor protein]-L-lysine = [E2 ubiquitin-conjugating enzyme]-L-cysteine + N(6)-ubiquitinyl-[acceptor protein]-L-lysine.. It participates in protein modification; protein ubiquitination. Probable component of the HRD1 ubiquitin ligase complex that mediates the rapid degradation of misfolded endoplasmic reticulum (ER) proteins, a process called ER-associated degradation (ERAD). Targets the misfolded LRR receptor kinase BRI1. Functions redundantly with HRD3A. The polypeptide is ERAD-associated E3 ubiquitin-protein ligase HRD1B (Arabidopsis thaliana (Mouse-ear cress)).